We begin with the raw amino-acid sequence, 691 residues long: Glycine--tRNA ligase beta subunit (691 aa).

The protein belongs to the class-II aminoacyl-tRNA synthetase family. As to quaternary structure, tetramer of two alpha and two beta subunits.

The protein resides in the cytoplasm. The enzyme catalyses tRNA(Gly) + glycine + ATP = glycyl-tRNA(Gly) + AMP + diphosphate. The protein is Glycine--tRNA ligase beta subunit of Levilactobacillus brevis (strain ATCC 367 / BCRC 12310 / CIP 105137 / JCM 1170 / LMG 11437 / NCIMB 947 / NCTC 947) (Lactobacillus brevis).